The sequence spans 107 residues: UPF0060 membrane protein glr4174 (107 aa).

Transmembrane regions (helical) follow at residues 1–21 (MALLLFGLAAAAEIGGCFAFW), 26–46 (LGKNPLWLAPGLVSLVVFAWL), 58–78 (AYAAYGGVYIAASLVWLWLVE), and 87–107 (LAGALLCLAGAAVILFADRSP).

It belongs to the UPF0060 family.

It localises to the cell inner membrane. This chain is UPF0060 membrane protein glr4174, found in Gloeobacter violaceus (strain ATCC 29082 / PCC 7421).